The chain runs to 691 residues: Lectin-domain containing receptor kinase VI.4 (691 aa).

Positions 1–19 (MGRAKSMVSLLLVLFLVRA) are cleaved as a signal peptide. The Extracellular portion of the chain corresponds to 20–306 (HVATTETTTE…AKKRGYNGKV (287 aa)). Residues 26–273 (TTTEFIFHGF…AHYVMGWSFA (248 aa)) form a legume-lectin like region. A helical membrane pass occupies residues 307–327 (IALIVALSTVISIMLVLLFLF). Topologically, residues 328-691 (MMYKKRMQQE…ISSTSLISGR (364 aa)) are cytoplasmic. The region spanning 363–641 (FKENRVVGTG…LNRDEDVPEI (279 aa)) is the Protein kinase domain. ATP-binding positions include 369–377 (VGTGGFGIV) and lysine 392. Residue aspartate 491 is the Proton acceptor of the active site.

The protein in the C-terminal section; belongs to the protein kinase superfamily. Ser/Thr protein kinase family. In the N-terminal section; belongs to the leguminous lectin family.

The protein resides in the cell membrane. It carries out the reaction L-seryl-[protein] + ATP = O-phospho-L-seryl-[protein] + ADP + H(+). The enzyme catalyses L-threonyl-[protein] + ATP = O-phospho-L-threonyl-[protein] + ADP + H(+). In terms of biological role, involved in negative regulation of abscisic acid response in seed germination. This is Lectin-domain containing receptor kinase VI.4 (LECRK64) from Arabidopsis thaliana (Mouse-ear cress).